Consider the following 312-residue polypeptide: Olfactory receptor 1D5 (312 aa).

Topologically, residues 1 to 25 (MDGDNQSENSQFLLLGISESPEQQQ) are extracellular. Residue Asn-5 is glycosylated (N-linked (GlcNAc...) asparagine). The helical transmembrane segment at 26-49 (ILFWMFLSMYLVTVLGNVLIILAI) threads the bilayer. Residues 50 to 57 (SSDSHLHT) are Cytoplasmic-facing. Residues 58–79 (PMYFFLANLSFTDLFFVTNTIP) traverse the membrane as a helical segment. Topologically, residues 80 to 100 (KMLVNFQSQNKAISYAGCLTQ) are extracellular. Cys-97 and Cys-189 are oxidised to a cystine. Residues 101 to 120 (LYFLVSLVTLDNLILAVMAY) traverse the membrane as a helical segment. The Cytoplasmic portion of the chain corresponds to 121–140 (DRYVAICCPLHYVTAMSPGL). The chain crosses the membrane as a helical span at residues 141 to 158 (CVLLLSLCWGLSVLYGLL). Over 159–196 (LTLLLTRVTFCGPREIHYLFCDMYILLRLACSNTHIIH) the chain is Extracellular. Residues 197 to 220 (TVLVATGCFIFLTPLGFMTTSYVC) traverse the membrane as a helical segment. Residues 221 to 237 (IVRTILQIPSASKKYKA) are Cytoplasmic-facing. A helical membrane pass occupies residues 238–260 (FSTCASHLGVVSLFYGTLAMVYL). Over 261–271 (QPLHTYSMKDS) the chain is Extracellular. The helical transmembrane segment at 272 to 291 (VATVMYAVVTPMMNPFIYSL) threads the bilayer. The Cytoplasmic segment spans residues 292 to 312 (RNKDMHGALGRVLRRLFQRPK).

This sequence belongs to the G-protein coupled receptor 1 family.

Its subcellular location is the cell membrane. In terms of biological role, odorant receptor. This is Olfactory receptor 1D5 (OR1D5) from Pan paniscus (Pygmy chimpanzee).